Reading from the N-terminus, the 336-residue chain is Alpha-N-acetylgalactosaminide alpha-2,6-sialyltransferase 5 (336 aa).

Residues methionine 1–glycine 8 lie on the Cytoplasmic side of the membrane. Residues leucine 9 to leucine 29 traverse the membrane as a helical; Signal-anchor for type II membrane protein segment. Residues glycine 30–phenylalanine 336 lie on the Lumenal side of the membrane. The interval glutamine 32–leucine 81 is disordered. Low complexity predominate over residues glutamine 38–glutamine 49. Polar residues predominate over residues alanine 50 to arginine 67. Residues cysteine 96 and cysteine 245 are joined by a disulfide bond. 2 N-linked (GlcNAc...) asparagine glycosylation sites follow: asparagine 137 and asparagine 161.

It belongs to the glycosyltransferase 29 family.

Its subcellular location is the golgi apparatus membrane. The catalysed reaction is a ganglioside GM1b (d18:1(4E)) + CMP-N-acetyl-beta-neuraminate = a ganglioside GD1alpha (d18:1(4E)) + CMP + H(+). It catalyses the reaction N-acetyl-alpha-neuraminosyl-(2-&gt;3)-beta-D-galactosyl-(1-&gt;3)-N-acetyl-beta-D-glucosaminyl-(1-&gt;3)-beta-D-galactosyl-(1-&gt;4)-beta-D-glucosyl-(1&lt;-&gt;1')-N-acyl-sphing-4-enine + CMP-N-acetyl-beta-neuraminate = N-acetyl-alpha-neuraminosyl-(2-&gt;3)-beta-D-galactosyl-(1-&gt;3)-[N-acetyl-alpha-neuraminosyl-(2-&gt;6)]-N-acetyl-beta-D-glucosaminyl-(1-&gt;3)-beta-D-galactosyl-(1-&gt;4)-beta-D-glucosyl-(1&lt;-&gt;1')-N-acyl-sphing-4-enine + CMP + H(+). The protein operates within glycolipid biosynthesis. Its function is as follows. Predominantly catalyzes the biosynthesis of ganglioside GD1alpha from GM1b in the brain, by transferring the sialyl group (N-acetyl-alpha-neuraminyl or NeuAc) from CMP-NeuAc to the GalNAc residue on the NeuAc-alpha-2,3-Gal-beta-1,3-GalNAc sequence of GM1b. GD1alpha is a critical molecule in the communication and interaction between neuronal cells and their supportive cells, particularly in brain tissues, and functions as an adhesion molecule in the process of metastasis. Also shows activity towards sialyl Lc4Cer (N-acetyl-alpha-neuraminosyl-(2-&gt;3)-beta-D-galactosyl-(1-&gt;3)-N-acetyl-beta-D-glucosaminyl-(1-&gt;3)-beta-D-galactosyl-(1-&gt;4)-beta-D-glucosyl-(1&lt;-&gt;1')-N-acyl-sphing-4-enine) generating disialyl Lc4Cer, which can lead to the synthesis of disialyl Lewis a (Le(a)), suggested to be a cancer-associated antigen. This is Alpha-N-acetylgalactosaminide alpha-2,6-sialyltransferase 5 (ST6GALNAC5) from Homo sapiens (Human).